A 249-amino-acid polypeptide reads, in one-letter code: Triosephosphate isomerase (249 aa).

A substrate-binding site is contributed by 9 to 11 (NWK). H94 serves as the catalytic Electrophile. E166 serves as the catalytic Proton acceptor. Substrate contacts are provided by residues G172, S211, and 232-233 (GG).

Belongs to the triosephosphate isomerase family. Homodimer.

The protein localises to the cytoplasm. It catalyses the reaction D-glyceraldehyde 3-phosphate = dihydroxyacetone phosphate. It functions in the pathway carbohydrate biosynthesis; gluconeogenesis. The protein operates within carbohydrate degradation; glycolysis; D-glyceraldehyde 3-phosphate from glycerone phosphate: step 1/1. Its function is as follows. Involved in the gluconeogenesis. Catalyzes stereospecifically the conversion of dihydroxyacetone phosphate (DHAP) to D-glyceraldehyde-3-phosphate (G3P). The sequence is that of Triosephosphate isomerase from Dechloromonas aromatica (strain RCB).